Here is a 124-residue protein sequence, read N- to C-terminus: Small ribosomal subunit protein uS12 (124 aa).

The residue at position 89 (D89) is a 3-methylthioaspartic acid. The disordered stretch occupies residues 102-124 (LDTSGVNNRKHGRSKYGTKRPKS). Over residues 109–124 (NRKHGRSKYGTKRPKS) the composition is skewed to basic residues.

Belongs to the universal ribosomal protein uS12 family. As to quaternary structure, part of the 30S ribosomal subunit. Contacts proteins S8 and S17. May interact with IF1 in the 30S initiation complex.

Functionally, with S4 and S5 plays an important role in translational accuracy. Its function is as follows. Interacts with and stabilizes bases of the 16S rRNA that are involved in tRNA selection in the A site and with the mRNA backbone. Located at the interface of the 30S and 50S subunits, it traverses the body of the 30S subunit contacting proteins on the other side and probably holding the rRNA structure together. The combined cluster of proteins S8, S12 and S17 appears to hold together the shoulder and platform of the 30S subunit. This chain is Small ribosomal subunit protein uS12, found in Francisella tularensis subsp. novicida (strain U112).